The following is a 535-amino-acid chain: CTP synthase (535 aa).

Positions 1-268 (MSTKYIFVTG…DQIVCDHLKL (268 aa)) are amidoligase domain. S14 serves as a coordination point for CTP. S14 is a UTP binding site. 15-20 (SIGKGI) lines the ATP pocket. Residue Y55 participates in L-glutamine binding. D72 is a binding site for ATP. D72 and E142 together coordinate Mg(2+). Residues 149–151 (DIE), 189–194 (KTKPTQ), and K225 contribute to the CTP site. UTP contacts are provided by residues 189–194 (KTKPTQ) and K225. The 243-residue stretch at 293–535 (KISLVGKYVE…FVTAAVENSN (243 aa)) folds into the Glutamine amidotransferase type-1 domain. Position 355 (G355) interacts with L-glutamine. The Nucleophile; for glutamine hydrolysis role is filled by C382. L-glutamine contacts are provided by residues 383–386 (LGMQ), E406, and R464. Residues H509 and E511 contribute to the active site.

Belongs to the CTP synthase family. As to quaternary structure, homotetramer.

It carries out the reaction UTP + L-glutamine + ATP + H2O = CTP + L-glutamate + ADP + phosphate + 2 H(+). It catalyses the reaction L-glutamine + H2O = L-glutamate + NH4(+). The catalysed reaction is UTP + NH4(+) + ATP = CTP + ADP + phosphate + 2 H(+). It functions in the pathway pyrimidine metabolism; CTP biosynthesis via de novo pathway; CTP from UDP: step 2/2. Allosterically activated by GTP, when glutamine is the substrate; GTP has no effect on the reaction when ammonia is the substrate. The allosteric effector GTP functions by stabilizing the protein conformation that binds the tetrahedral intermediate(s) formed during glutamine hydrolysis. Inhibited by the product CTP, via allosteric rather than competitive inhibition. In terms of biological role, catalyzes the ATP-dependent amination of UTP to CTP with either L-glutamine or ammonia as the source of nitrogen. Regulates intracellular CTP levels through interactions with the four ribonucleotide triphosphates. The polypeptide is CTP synthase (Streptococcus pneumoniae (strain ATCC BAA-255 / R6)).